The primary structure comprises 126 residues: Large ribosomal subunit protein bL12 (126 aa).

The protein belongs to the bacterial ribosomal protein bL12 family. In terms of assembly, homodimer. Part of the ribosomal stalk of the 50S ribosomal subunit. Forms a multimeric L10(L12)X complex, where L10 forms an elongated spine to which 2 to 4 L12 dimers bind in a sequential fashion. Binds GTP-bound translation factors.

In terms of biological role, forms part of the ribosomal stalk which helps the ribosome interact with GTP-bound translation factors. Is thus essential for accurate translation. The polypeptide is Large ribosomal subunit protein bL12 (Prosthecochloris aestuarii (strain DSM 271 / SK 413)).